Here is a 217-residue protein sequence, read N- to C-terminus: Protein GrpE (217 aa).

3 stretches are compositionally biased toward acidic residues: residues 1-28 (MSDD…EGDD), 136-152 (DILD…DPGT), and 204-217 (SEAE…DGDE). Disordered stretches follow at residues 1–44 (MSDD…NDPA), 135–157 (DDIL…TDPK), and 193–217 (QVTV…DGDE).

Belongs to the GrpE family. As to quaternary structure, homodimer.

Its subcellular location is the cytoplasm. Its function is as follows. Participates actively in the response to hyperosmotic and heat shock by preventing the aggregation of stress-denatured proteins, in association with DnaK and GrpE. It is the nucleotide exchange factor for DnaK and may function as a thermosensor. Unfolded proteins bind initially to DnaJ; upon interaction with the DnaJ-bound protein, DnaK hydrolyzes its bound ATP, resulting in the formation of a stable complex. GrpE releases ADP from DnaK; ATP binding to DnaK triggers the release of the substrate protein, thus completing the reaction cycle. Several rounds of ATP-dependent interactions between DnaJ, DnaK and GrpE are required for fully efficient folding. The chain is Protein GrpE from Natronomonas pharaonis (strain ATCC 35678 / DSM 2160 / CIP 103997 / JCM 8858 / NBRC 14720 / NCIMB 2260 / Gabara) (Halobacterium pharaonis).